The sequence spans 578 residues: Triokinase/FMN cyclase (578 aa).

The DhaK domain maps to 9–336 (SVEGCAGDAL…IDAETNAKAW (328 aa)). Dihydroxyacetone-binding positions include 56–59 (GSGH), Lys-109, and Asp-114. Catalysis depends on His-221, which acts as the Tele-hemiaminal-histidine intermediate. The DhaL domain occupies 372–571 (KQMTLVLDRI…AAAIFRAILE (200 aa)). Residues 401–404 (DGDC), 446–447 (SS), Gly-486, and 494–495 (TM) each bind ATP. 2 positions are modified to phosphoserine: Ser-511 and Ser-545. 556-558 (DPG) provides a ligand contact to ATP.

This sequence belongs to the dihydroxyacetone kinase (DAK) family. In terms of assembly, homodimer. Interacts with IFIH1 (via the CARD domains), the interaction is inhibited by viral infection. The cofactor is Mg(2+). Requires Mn(2+) as cofactor. Co(2+) is required as a cofactor.

It carries out the reaction dihydroxyacetone + ATP = dihydroxyacetone phosphate + ADP + H(+). It catalyses the reaction D-glyceraldehyde + ATP = D-glyceraldehyde 3-phosphate + ADP + H(+). The enzyme catalyses FAD = riboflavin cyclic-4',5'-phosphate + AMP + H(+). With respect to regulation, each activity is inhibited by the substrate(s) of the other. Its function is as follows. Catalyzes both the phosphorylation of dihydroxyacetone and of glyceraldehyde, and the splitting of ribonucleoside diphosphate-X compounds among which FAD is the best substrate. Represses IFIH1-mediated cellular antiviral response. The protein is Triokinase/FMN cyclase (Tkfc) of Rattus norvegicus (Rat).